Reading from the N-terminus, the 304-residue chain is Dihydroorotate dehydrogenase B (NAD(+)), catalytic subunit (304 aa).

FMN is bound by residues serine 21 and 45–46; that span reads KA. Substrate is bound by residues lysine 45 and 69 to 73; that span reads NAIGL. Residues asparagine 99 and asparagine 127 each contribute to the FMN site. Asparagine 127 serves as a coordination point for substrate. Cysteine 130 (nucleophile) is an active-site residue. Positions 165 and 191 each coordinate FMN. Residue 192-193 coordinates substrate; sequence NT. FMN contacts are provided by residues glycine 217, 243–244, and 265–266; these read GG and GT.

It belongs to the dihydroorotate dehydrogenase family. Type 1 subfamily. As to quaternary structure, heterotetramer of 2 PyrK and 2 PyrD type B subunits. The cofactor is FMN.

The protein localises to the cytoplasm. It catalyses the reaction (S)-dihydroorotate + NAD(+) = orotate + NADH + H(+). It participates in pyrimidine metabolism; UMP biosynthesis via de novo pathway; orotate from (S)-dihydroorotate (NAD(+) route): step 1/1. In terms of biological role, catalyzes the conversion of dihydroorotate to orotate with NAD(+) as electron acceptor. The polypeptide is Dihydroorotate dehydrogenase B (NAD(+)), catalytic subunit (pyrD) (Listeria monocytogenes serovar 1/2a (strain ATCC BAA-679 / EGD-e)).